We begin with the raw amino-acid sequence, 356 residues long: Protein RecA (356 aa).

71 to 78 (GPESSGKT) contributes to the ATP binding site.

The protein belongs to the RecA family.

Its subcellular location is the cytoplasm. Its function is as follows. Can catalyze the hydrolysis of ATP in the presence of single-stranded DNA, the ATP-dependent uptake of single-stranded DNA by duplex DNA, and the ATP-dependent hybridization of homologous single-stranded DNAs. It interacts with LexA causing its activation and leading to its autocatalytic cleavage. The chain is Protein RecA from Synechococcus elongatus (strain ATCC 33912 / PCC 7942 / FACHB-805) (Anacystis nidulans R2).